Here is a 459-residue protein sequence, read N- to C-terminus: DNA polymerase subunit gamma-2 (459 aa).

Heterotrimer composed of a catalytic subunit and a homodimer of accessory subunits (POLG:POLG2).

Its subcellular location is the mitochondrion. It localises to the mitochondrion matrix. The protein resides in the mitochondrion nucleoid. Functionally, accessory subunit of DNA polymerase gamma solely responsible for replication of mitochondrial DNA (mtDNA). Acts as an allosteric regulator of the holoenzyme activities. Enhances the polymerase activity and the processivity of POLG by increasing its interactions with the DNA template. Suppresses POLG exonucleolytic proofreading especially toward homopolymeric templates bearing mismatched termini. Binds to single-stranded DNA. This is DNA polymerase subunit gamma-2 (Polg2) from Mus musculus (Mouse).